The sequence spans 116 residues: MRCLSKKHQKQGDEHGGEIPLPNPDEGTIICGVVRHLGGDYLIAKCLDGVDRKIRIPGKLRRKVWITEGDIILVGLWDFSSEKGEVVYKYGKNEVNKLVEKGVVPKEFIDALSELI.

A disordered region spans residues 1-25; it reads MRCLSKKHQKQGDEHGGEIPLPNPD. One can recognise an S1-like domain in the interval 17-91; it reads GEIPLPNPDE…EKGEVVYKYG (75 aa).

It belongs to the eIF-1A family.

Its function is as follows. Seems to be required for maximal rate of protein biosynthesis. Enhances ribosome dissociation into subunits and stabilizes the binding of the initiator Met-tRNA(I) to 40 S ribosomal subunits. In Desulfurococcus amylolyticus (strain DSM 18924 / JCM 16383 / VKM B-2413 / 1221n) (Desulfurococcus kamchatkensis), this protein is Translation initiation factor 1A (eIF1A).